The chain runs to 98 residues: MKTLSEIKEILRKHKKELKEKYKVKSIAIFGSYARNEQTETSDIDILIDYYEPISLLKLIELENYLSDLLEIKVDLITKNSIHNPYVKKSIEEDLIYI.

Residues 31-45 carry the GSX(10)DXD motif motif; the sequence is GSYARNEQTETSDID. Mg(2+) contacts are provided by D43, D45, and D75.

Belongs to the MntA antitoxin family. Probably forms a complex with cognate toxin MJ0125. Mg(2+) serves as cofactor.

The enzyme catalyses L-tyrosyl-[protein] + ATP = O-(5'-adenylyl)-L-tyrosyl-[protein] + diphosphate. The catalysed reaction is O-(5'-adenylyl)-L-tyrosyl-[protein] + ATP = O-[5'-(adenylyl-(5'-&gt;3')-adenylyl)]-L-tyrosyl-[protein] + diphosphate. Its function is as follows. Probable antitoxin component of a putative type VII toxin-antitoxin (TA) system. Neutralizes cognate toxic MJ0125 by di-AMPylation. This is Putative protein adenylyltransferase MJ0126 from Methanocaldococcus jannaschii (strain ATCC 43067 / DSM 2661 / JAL-1 / JCM 10045 / NBRC 100440) (Methanococcus jannaschii).